The chain runs to 489 residues: Betaine aldehyde dehydrogenase (489 aa).

2 residues coordinate K(+): Thr26 and Asp93. NAD(+) is bound at residue 150-152; that stretch reads GAW. The active-site Charge relay system is Lys162. An NAD(+)-binding site is contributed by 176 to 179; sequence KPSE. Position 180 (Val180) interacts with K(+). 229–232 provides a ligand contact to NAD(+); the sequence is GVET. Leu245 contributes to the K(+) binding site. Residue Glu251 is the Proton acceptor of the active site. The NAD(+) site is built by Gly253, Cys285, and Glu386. Cys285 serves as the catalytic Nucleophile. Cys285 carries the post-translational modification Cysteine sulfenic acid (-SOH). Residues Lys456 and Gly459 each contribute to the K(+) site. The Charge relay system role is filled by Glu463.

It belongs to the aldehyde dehydrogenase family. As to quaternary structure, dimer of dimers. K(+) is required as a cofactor.

It carries out the reaction betaine aldehyde + NAD(+) + H2O = glycine betaine + NADH + 2 H(+). It functions in the pathway amine and polyamine biosynthesis; betaine biosynthesis via choline pathway; betaine from betaine aldehyde: step 1/1. In terms of biological role, involved in the biosynthesis of the osmoprotectant glycine betaine. Catalyzes the irreversible oxidation of betaine aldehyde to the corresponding acid. This Burkholderia vietnamiensis (strain G4 / LMG 22486) (Burkholderia cepacia (strain R1808)) protein is Betaine aldehyde dehydrogenase.